Here is a 119-residue protein sequence, read N- to C-terminus: Ribosome-binding factor A (119 aa).

This sequence belongs to the RbfA family. Monomer. Binds 30S ribosomal subunits, but not 50S ribosomal subunits or 70S ribosomes.

It is found in the cytoplasm. In terms of biological role, one of several proteins that assist in the late maturation steps of the functional core of the 30S ribosomal subunit. Associates with free 30S ribosomal subunits (but not with 30S subunits that are part of 70S ribosomes or polysomes). Required for efficient processing of 16S rRNA. May interact with the 5'-terminal helix region of 16S rRNA. This is Ribosome-binding factor A from Citrifermentans bemidjiense (strain ATCC BAA-1014 / DSM 16622 / JCM 12645 / Bem) (Geobacter bemidjiensis).